The primary structure comprises 238 residues: Demethylmenaquinone methyltransferase (238 aa).

Residues T60, D81, and 108-109 (NA) contribute to the S-adenosyl-L-methionine site.

Belongs to the class I-like SAM-binding methyltransferase superfamily. MenG/UbiE family.

It catalyses the reaction a 2-demethylmenaquinol + S-adenosyl-L-methionine = a menaquinol + S-adenosyl-L-homocysteine + H(+). Its pathway is quinol/quinone metabolism; menaquinone biosynthesis; menaquinol from 1,4-dihydroxy-2-naphthoate: step 2/2. Functionally, methyltransferase required for the conversion of demethylmenaquinol (DMKH2) to menaquinol (MKH2). This Oceanobacillus iheyensis (strain DSM 14371 / CIP 107618 / JCM 11309 / KCTC 3954 / HTE831) protein is Demethylmenaquinone methyltransferase.